Here is a 100-residue protein sequence, read N- to C-terminus: Protein MEN-8 (100 aa).

The N-terminal stretch at 1 to 33 (MANNMKSATFCKATWAIFLVALAILVQLKGSEA) is a signal peptide. Intrachain disulfides connect C38–C76, C48–C65, C66–C91, and C78–C98.

Belongs to the A9/FIL1 family.

The protein localises to the secreted. In Silene latifolia (White campion), this protein is Protein MEN-8 (MEN-8).